The following is a 290-amino-acid chain: BEL1-like homeodomain protein 11 (290 aa).

The tract at residues 20-36 (SRYAKAVQCLVEEVIDI) is SR/KY domain. The tract at residues 81-152 (ENHEIHIKIT…SLEEAIISQL (72 aa)) is BELL domain. Residues 202-264 (AWKPIRGLPE…NARVRLWKPM (63 aa)) constitute a DNA-binding region (homeobox).

Belongs to the TALE/BELL homeobox family. In terms of assembly, may form heterodimeric complexes with TALE/KNOX proteins.

It is found in the nucleus. The chain is BEL1-like homeodomain protein 11 (BLH11) from Arabidopsis thaliana (Mouse-ear cress).